The primary structure comprises 208 residues: Thymidylate kinase (208 aa).

An ATP-binding site is contributed by 10–17 (GPDGSGKT).

Belongs to the thymidylate kinase family.

The catalysed reaction is dTMP + ATP = dTDP + ADP. Functionally, phosphorylation of dTMP to form dTDP in both de novo and salvage pathways of dTTP synthesis. The protein is Thymidylate kinase of Listeria welshimeri serovar 6b (strain ATCC 35897 / DSM 20650 / CCUG 15529 / CIP 8149 / NCTC 11857 / SLCC 5334 / V8).